Here is a 789-residue protein sequence, read N- to C-terminus: uncharacterized protein (789 aa).

5 disordered regions span residues 107–326, 426–491, 523–625, 666–751, and 765–789; these read YQQD…NNNN, MLKS…NNNN, SVNF…ISNN, THTF…KGNN, and PTRFNNKNNNNSNGFTSNKRFYNQH. Positions 113-123 are enriched in acidic residues; it reads NNTDDEQEQEQ. 4 stretches are compositionally biased toward low complexity: residues 124–141, 151–194, 201–213, and 225–270; these read EQQQKQNEIINKITTPIK, TSQT…ITPI, SISTSSSKQLRSS, and TSST…THNS. Residues 274–290 are compositionally biased toward acidic residues; sequence IDDDDGDNNDEINDEND. Composition is skewed to low complexity over residues 291–326 and 429–491; these read INSNNLTFSSSTKSKKINNNNNSIDSNNTNINNNNN and SNNS…NNNN. The span at 523-549 shows a compositional bias: polar residues; it reads SVNFDRNQNQKSPFLNNTSMPNINFNE. Composition is skewed to low complexity over residues 550 to 581, 602 to 617, 696 to 722, and 766 to 789; these read QSQQQSQNQYYQQQQQQQQQQSNNSMNQSINY, TSGSSLKYSTSSNNSK, HIMNSMNSNFNHHHNNNNQLFNNSGSN, and TRFNNKNNNNSNGFTSNKRFYNQH.

This is an uncharacterized protein from Dictyostelium discoideum (Social amoeba).